We begin with the raw amino-acid sequence, 216 residues long: Protein U63 (216 aa).

It belongs to the herpesviridae UL92 family.

The polypeptide is Protein U63 (U63) (Homo sapiens (Human)).